A 453-amino-acid chain; its full sequence is V-type proton ATPase subunit B (453 aa).

Residue R341 participates in ATP binding.

The protein belongs to the ATPase alpha/beta chains family. In terms of assembly, V-ATPase is a heteromultimeric enzyme made up of two complexes: the ATP-hydrolytic V1 complex and the proton translocation V0 complex. The V1 complex consists of three catalytic AB heterodimers that form a heterohexamer, three peripheral stalks each consisting of EG heterodimers, one central rotor including subunits D and F, and the regulatory subunits C and H. The proton translocation complex V0 consists of the proton transport subunit a, a ring of proteolipid subunits c9c'', rotary subunit d, subunits e and f, and two accessory subunits.

Non-catalytic subunit of the V1 complex of vacuolar(H+)-ATPase (V-ATPase), a multisubunit enzyme composed of a peripheral complex (V1) that hydrolyzes ATP and a membrane integral complex (V0) that translocates protons. V-ATPase is responsible for acidifying and maintaining the pH of intracellular compartments and in some cell types, is targeted to the plasma membrane, where it is responsible for acidifying the extracellular environment. Essential for the proper assembly and activity of V-ATPase. The polypeptide is V-type proton ATPase subunit B (ATP6V1B) (Gallus gallus (Chicken)).